A 424-amino-acid chain; its full sequence is Glutamyl-tRNA reductase (424 aa).

Substrate is bound by residues 49–52, Ser107, 112–114, and Gln118; these read TCNR and EPQ. The active-site Nucleophile is Cys50. 187-192 lines the NADP(+) pocket; the sequence is GAGETI.

It belongs to the glutamyl-tRNA reductase family. Homodimer.

The catalysed reaction is (S)-4-amino-5-oxopentanoate + tRNA(Glu) + NADP(+) = L-glutamyl-tRNA(Glu) + NADPH + H(+). It participates in porphyrin-containing compound metabolism; protoporphyrin-IX biosynthesis; 5-aminolevulinate from L-glutamyl-tRNA(Glu): step 1/2. Catalyzes the NADPH-dependent reduction of glutamyl-tRNA(Glu) to glutamate 1-semialdehyde (GSA). This Pseudomonas fluorescens (strain ATCC BAA-477 / NRRL B-23932 / Pf-5) protein is Glutamyl-tRNA reductase.